A 463-amino-acid polypeptide reads, in one-letter code: ATP-dependent protease ATPase subunit HslU (463 aa).

ATP-binding positions include Val-21, 63-68 (GVGKTE), Asp-276, Glu-341, and Arg-413.

The protein belongs to the ClpX chaperone family. HslU subfamily. As to quaternary structure, a double ring-shaped homohexamer of HslV is capped on each side by a ring-shaped HslU homohexamer. The assembly of the HslU/HslV complex is dependent on binding of ATP.

It is found in the cytoplasm. Functionally, ATPase subunit of a proteasome-like degradation complex; this subunit has chaperone activity. The binding of ATP and its subsequent hydrolysis by HslU are essential for unfolding of protein substrates subsequently hydrolyzed by HslV. HslU recognizes the N-terminal part of its protein substrates and unfolds these before they are guided to HslV for hydrolysis. This chain is ATP-dependent protease ATPase subunit HslU, found in Thermotoga sp. (strain RQ2).